A 581-amino-acid polypeptide reads, in one-letter code: Arginine--tRNA ligase (581 aa).

The 'HIGH' region signature appears at 123–133; it reads PNVAKEMHVGH.

This sequence belongs to the class-I aminoacyl-tRNA synthetase family. Monomer.

It is found in the cytoplasm. It carries out the reaction tRNA(Arg) + L-arginine + ATP = L-arginyl-tRNA(Arg) + AMP + diphosphate. The polypeptide is Arginine--tRNA ligase (Blochmanniella pennsylvanica (strain BPEN)).